Reading from the N-terminus, the 274-residue chain is Large ribosomal subunit protein uL2cz/uL2cy (274 aa).

Disordered regions lie at residues 1–25 and 223–274; these read MAIHLYKTSTPSTRNGAVDSQVKSN and MNPV…RRTK.

It belongs to the universal ribosomal protein uL2 family. In terms of assembly, part of the 50S ribosomal subunit.

It localises to the plastid. The protein localises to the chloroplast. The protein is Large ribosomal subunit protein uL2cz/uL2cy (rpl2-A) of Citrus sinensis (Sweet orange).